Here is a 953-residue protein sequence, read N- to C-terminus: 2-oxoglutarate dehydrogenase E1 component (953 aa).

The protein belongs to the alpha-ketoglutarate dehydrogenase family. Homodimer. Part of the 2-oxoglutarate dehydrogenase (OGDH) complex composed of E1 (2-oxoglutarate dehydrogenase), E2 (dihydrolipoamide succinyltransferase) and E3 (dihydrolipoamide dehydrogenase); the complex contains multiple copies of the three enzymatic components (E1, E2 and E3). Thiamine diphosphate serves as cofactor.

It catalyses the reaction N(6)-[(R)-lipoyl]-L-lysyl-[protein] + 2-oxoglutarate + H(+) = N(6)-[(R)-S(8)-succinyldihydrolipoyl]-L-lysyl-[protein] + CO2. Its function is as follows. E1 component of the 2-oxoglutarate dehydrogenase (OGDH) complex which catalyzes the decarboxylation of 2-oxoglutarate, the first step in the conversion of 2-oxoglutarate to succinyl-CoA and CO(2). In Oceanobacillus iheyensis (strain DSM 14371 / CIP 107618 / JCM 11309 / KCTC 3954 / HTE831), this protein is 2-oxoglutarate dehydrogenase E1 component.